Here is a 45-residue protein sequence, read N- to C-terminus: Osteocalcin (45 aa).

Residues 1–44 (AGTAXGDLTPFQLESLREVCEVNLACEHMADTXGIVAAYTAYYG) form the Gla domain. Ca(2+)-binding residues include E14, E18, E21, and E27. E14, E18, and E21 each carry 4-carboxyglutamate. A disulfide bond links C20 and C26.

It belongs to the osteocalcin/matrix Gla protein family. In terms of processing, gamma-carboxyglutamate residues are formed by vitamin K dependent carboxylation by GGCX. These residues are essential for the binding of calcium.

Its subcellular location is the secreted. Functionally, the carboxylated form is one of the main organic components of the bone matrix, which constitutes 1-2% of the total bone protein. The carboxylated form binds strongly to apatite and calcium. This Danio rerio (Zebrafish) protein is Osteocalcin (bglap).